Reading from the N-terminus, the 447-residue chain is ATP-dependent protease ATPase subunit HslU (447 aa).

ATP contacts are provided by residues Ile-17, 59–64 (GVGKTE), Asp-256, Glu-321, and Arg-393.

This sequence belongs to the ClpX chaperone family. HslU subfamily. In terms of assembly, a double ring-shaped homohexamer of HslV is capped on each side by a ring-shaped HslU homohexamer. The assembly of the HslU/HslV complex is dependent on binding of ATP.

The protein resides in the cytoplasm. Functionally, ATPase subunit of a proteasome-like degradation complex; this subunit has chaperone activity. The binding of ATP and its subsequent hydrolysis by HslU are essential for unfolding of protein substrates subsequently hydrolyzed by HslV. HslU recognizes the N-terminal part of its protein substrates and unfolds these before they are guided to HslV for hydrolysis. In Pseudomonas putida (strain GB-1), this protein is ATP-dependent protease ATPase subunit HslU.